The following is a 194-amino-acid chain: Large ribosomal subunit protein eL15 (194 aa).

Residues 164–194 (AGRKARGLRRKGRGAEKVRPSLRANFRKKRR) are disordered. A compositionally biased stretch (basic residues) spans 166–175 (RKARGLRRKG).

The protein belongs to the eukaryotic ribosomal protein eL15 family.

The protein is Large ribosomal subunit protein eL15 (rpl15e) of Archaeoglobus fulgidus (strain ATCC 49558 / DSM 4304 / JCM 9628 / NBRC 100126 / VC-16).